Reading from the N-terminus, the 41-residue chain is Alpha-conotoxin-like Pu1.2 (41 aa).

The propeptide occupies 1 to 21 (LDGRNAAADFETSDLLAMTIR). 2 cysteine pairs are disulfide-bonded: Cys24-Cys30 and Cys25-Cys37. At Cys37 the chain carries Cysteine amide. Positions 38 to 41 (GGKR) are excised as a propeptide.

This sequence belongs to the conotoxin A superfamily. Post-translationally, non-native isomers 'ribbon' (with disulfide connectivity C1-C4, C2-C3) and 'beads' (with disulfide connectivity C1-C2, C3-C4) also inhibit high voltage-activated (HVA) calcium channel currents in rat DRG neurons (25-30% inhibition at 1 uM toxin). Mutants Pu1.2(9-16), [C3S; C9S]Pu1.2 and [C4S]Pu1.2(1-9) are all C-terminally amidated. As to expression, expressed by the venom duct.

Its subcellular location is the secreted. Alpha-conotoxins act on postsynaptic membranes, they bind to the nicotinic acetylcholine receptors (nAChR) and thus inhibit them. This toxin also inhibits high voltage-activated (HVA) calcium channel currents in rat DRG neurons (27% inhibition at 1 uM toxin) probably by activating GABA(B) receptors (GABBR1 and/or GABBR2). The chain is Alpha-conotoxin-like Pu1.2 from Conus pulicarius (Flea-bitten cone).